Consider the following 145-residue polypeptide: D-aminoacyl-tRNA deacylase (145 aa).

The Gly-cisPro motif, important for rejection of L-amino acids signature appears at 137–138 (GP).

The protein belongs to the DTD family. Homodimer.

The protein localises to the cytoplasm. It catalyses the reaction glycyl-tRNA(Ala) + H2O = tRNA(Ala) + glycine + H(+). The enzyme catalyses a D-aminoacyl-tRNA + H2O = a tRNA + a D-alpha-amino acid + H(+). Functionally, an aminoacyl-tRNA editing enzyme that deacylates mischarged D-aminoacyl-tRNAs. Also deacylates mischarged glycyl-tRNA(Ala), protecting cells against glycine mischarging by AlaRS. Acts via tRNA-based rather than protein-based catalysis; rejects L-amino acids rather than detecting D-amino acids in the active site. By recycling D-aminoacyl-tRNA to D-amino acids and free tRNA molecules, this enzyme counteracts the toxicity associated with the formation of D-aminoacyl-tRNA entities in vivo and helps enforce protein L-homochirality. The polypeptide is D-aminoacyl-tRNA deacylase (Aeromonas hydrophila subsp. hydrophila (strain ATCC 7966 / DSM 30187 / BCRC 13018 / CCUG 14551 / JCM 1027 / KCTC 2358 / NCIMB 9240 / NCTC 8049)).